A 440-amino-acid polypeptide reads, in one-letter code: Ribosomal protein uS12 methylthiotransferase RimO (440 aa).

The region spanning 8 to 118 (PTVGFVSLGC…VMGIVHTHLP (111 aa)) is the MTTase N-terminal domain. Residues Cys-17, Cys-53, Cys-82, Cys-149, Cys-153, and Cys-156 each coordinate [4Fe-4S] cluster. In terms of domain architecture, Radical SAM core spans 135–372 (LTPDHFAYLK…MQVQEDISAD (238 aa)). The 66-residue stretch at 375-440 (AAKIDTVIQV…DHHDLYAQVV (66 aa)) folds into the TRAM domain.

It belongs to the methylthiotransferase family. RimO subfamily. [4Fe-4S] cluster is required as a cofactor.

It localises to the cytoplasm. The catalysed reaction is L-aspartate(89)-[ribosomal protein uS12]-hydrogen + (sulfur carrier)-SH + AH2 + 2 S-adenosyl-L-methionine = 3-methylsulfanyl-L-aspartate(89)-[ribosomal protein uS12]-hydrogen + (sulfur carrier)-H + 5'-deoxyadenosine + L-methionine + A + S-adenosyl-L-homocysteine + 2 H(+). Catalyzes the methylthiolation of an aspartic acid residue of ribosomal protein uS12. This chain is Ribosomal protein uS12 methylthiotransferase RimO, found in Dechloromonas aromatica (strain RCB).